The chain runs to 1728 residues: Lysophospholipase NTE1 (1728 aa).

The Cytoplasmic portion of the chain corresponds to 1 to 44; the sequence is MDSSSIAHESDIVSTERNILPERFISNKQQGNYLEDGSGDGNGK. Residues 45-65 traverse the membrane as a helical segment; the sequence is AAEHWLLAAIFNFFWVISYFI. At 66–97 the chain is on the lumenal side; that stretch reads SGSTHIAFRSSWYIVSLLLLKFPKWIIVEANH. The chain crosses the membrane as a helical span at residues 98 to 118; the sequence is IHLTIPFSVLVVTLAIIFYVS. The Cytoplasmic portion of the chain corresponds to 119-1728; sequence YEFLKGRLLS…GFFLHRRNSI (1610 aa). A compositionally biased stretch (low complexity) spans 141-150; it reads SLNSKNSKSS. Disordered regions lie at residues 141–167, 285–368, 406–436, 454–488, 596–660, and 687–756; these read SLNS…RRRR, RKKK…DEST, NDNV…LSTS, TEAS…VTTP, NLQK…TGSR, and ASPS…FTSF. The segment covering 153–162 has biased composition (basic and acidic residues); sequence LHHDSKDSNT. 2 stretches are compositionally biased toward polar residues: residues 293 to 303 and 326 to 336; these read SRHGQYNNNSD and MRSSSRNQNIP. Acidic residues predominate over residues 345-367; it reads SSDEESDINDGDSESQSESDDES. Polar residues-rich tracts occupy residues 406 to 424, 454 to 479, and 599 to 609; these read NDNV…NYTN, TEAS…SKSI, and KGFQSPTSSRL. Residues 610–628 are compositionally biased toward low complexity; sequence TSNFNGNSNNQRTNSRNSQ. Composition is skewed to polar residues over residues 642–657 and 729–756; these read ELSQ…TPIT and IYNN…FTSF. A nucleoside 3',5'-cyclic phosphate contacts are provided by residues 854 to 987 and 983 to 1121; these read SPTL…LTSL and SLTS…VAKK. The tract at residues 1034 to 1055 is disordered; it reads PELEENSTDYPNDGEEKDSSRD. A compositionally biased stretch (acidic residues) spans 1036-1049; that stretch reads LEENSTDYPNDGEE. Positions 1422–1586 constitute a PNPLA domain; the sequence is LVLGGGGARG…VDNLPVLEMK (165 aa). Positions 1426–1431 match the GXGXXG motif; sequence GGGARG. Positions 1453–1457 match the GXSXG motif; sequence GTSIG. Ser-1455 acts as the Nucleophile in catalysis. Asp-1573 serves as the catalytic Proton acceptor. Residues 1573 to 1575 carry the DGA/G motif; that stretch reads DGG.

The protein belongs to the NTE family.

Its subcellular location is the endoplasmic reticulum membrane. It catalyses the reaction a 1-acyl-sn-glycero-3-phosphocholine + H2O = sn-glycerol 3-phosphocholine + a fatty acid + H(+). With respect to regulation, inhibited by organophosphorus esters. Functionally, intracellular phospholipase B that catalyzes the double deacylation of phosphatidylcholine (PC) to glycerophosphocholine (GroPCho). Plays an important role in membrane lipid homeostasis. Responsible for the rapid PC turnover in response to inositol, elevated temperatures, or when choline is present in the growth medium. The sequence is that of Lysophospholipase NTE1 (NTE1) from Candida glabrata (strain ATCC 2001 / BCRC 20586 / JCM 3761 / NBRC 0622 / NRRL Y-65 / CBS 138) (Yeast).